The sequence spans 156 residues: Calglandulin (156 aa).

EF-hand domains follow at residues 8-43, 44-79, 82-117, and 118-153; these read EQIT…IGIN, PTKR…YHEK, NQDE…AGEP, and LNEH…ESFK. Residues D131, D133, D135, T137, and E142 each coordinate Ca(2+).

It belongs to the calmodulin family. Calglandulin subfamily. Expressed by the venom gland.

The protein localises to the cytoplasm. Its function is as follows. May be involved in the cellular control mechanism of the secretion of toxins from the gland into the venom. The polypeptide is Calglandulin (Tropidechis carinatus (Australian rough-scaled snake)).